Consider the following 169-residue polypeptide: Cell division inhibitor SulA (169 aa).

A ftsZ binding region spans residues 106–112 (ALRTGNY). The segment at 162–169 (KIHSNLYH) is lon protease binding.

The protein belongs to the SulA family. In terms of assembly, interacts with FtsZ. Is rapidly cleaved and degraded by the Lon protease once DNA damage is repaired.

Component of the SOS system and an inhibitor of cell division. Accumulation of SulA causes rapid cessation of cell division and the appearance of long, non-septate filaments. In the presence of GTP, binds a polymerization-competent form of FtsZ in a 1:1 ratio, thus inhibiting FtsZ polymerization and therefore preventing it from participating in the assembly of the Z ring. This mechanism prevents the premature segregation of damaged DNA to daughter cells during cell division. The sequence is that of Cell division inhibitor SulA from Salmonella arizonae (strain ATCC BAA-731 / CDC346-86 / RSK2980).